A 120-amino-acid chain; its full sequence is Aspartate 1-decarboxylase (120 aa).

The Schiff-base intermediate with substrate; via pyruvic acid role is filled by S25. The residue at position 25 (S25) is a Pyruvic acid (Ser). Substrate is bound at residue T57. Y58 functions as the Proton donor in the catalytic mechanism. 73-75 is a substrate binding site; it reads GAA.

The protein belongs to the PanD family. As to quaternary structure, heterooctamer of four alpha and four beta subunits. Pyruvate is required as a cofactor. Is synthesized initially as an inactive proenzyme, which is activated by self-cleavage at a specific serine bond to produce a beta-subunit with a hydroxyl group at its C-terminus and an alpha-subunit with a pyruvoyl group at its N-terminus.

It is found in the cytoplasm. The catalysed reaction is L-aspartate + H(+) = beta-alanine + CO2. The protein operates within cofactor biosynthesis; (R)-pantothenate biosynthesis; beta-alanine from L-aspartate: step 1/1. Functionally, catalyzes the pyruvoyl-dependent decarboxylation of aspartate to produce beta-alanine. The polypeptide is Aspartate 1-decarboxylase (Thermosipho africanus (strain TCF52B)).